A 299-amino-acid polypeptide reads, in one-letter code: Bifunctional protein FolD (299 aa).

NADP(+) contacts are provided by residues 164–166 (GRS) and I234.

It belongs to the tetrahydrofolate dehydrogenase/cyclohydrolase family. Homodimer.

The catalysed reaction is (6R)-5,10-methylene-5,6,7,8-tetrahydrofolate + NADP(+) = (6R)-5,10-methenyltetrahydrofolate + NADPH. It catalyses the reaction (6R)-5,10-methenyltetrahydrofolate + H2O = (6R)-10-formyltetrahydrofolate + H(+). Its pathway is one-carbon metabolism; tetrahydrofolate interconversion. Its function is as follows. Catalyzes the oxidation of 5,10-methylenetetrahydrofolate to 5,10-methenyltetrahydrofolate and then the hydrolysis of 5,10-methenyltetrahydrofolate to 10-formyltetrahydrofolate. This Christiangramia forsetii (strain DSM 17595 / CGMCC 1.15422 / KT0803) (Gramella forsetii) protein is Bifunctional protein FolD.